Here is a 185-residue protein sequence, read N- to C-terminus: Ribosome-recycling factor (185 aa).

Belongs to the RRF family.

The protein localises to the cytoplasm. Its function is as follows. Responsible for the release of ribosomes from messenger RNA at the termination of protein biosynthesis. May increase the efficiency of translation by recycling ribosomes from one round of translation to another. This Heliobacterium modesticaldum (strain ATCC 51547 / Ice1) protein is Ribosome-recycling factor.